Consider the following 299-residue polypeptide: Taste receptor type 2 member 5 (299 aa).

Residue methionine 1 is a topological domain, extracellular. A helical transmembrane segment spans residues 2 to 22; the sequence is LSAGLGLLMLVAVVEFLIGLI. At 23 to 45 the chain is on the cytoplasmic side; that stretch reads GNGVLVVWSFREWIRKFSWSSYN. The chain crosses the membrane as a helical span at residues 46 to 66; that stretch reads LIILGLAGCRFVLQWLIILDL. The Extracellular portion of the chain corresponds to 67–82; the sequence is SLFPLFQSSRWLRYLS. Residues 83–103 form a helical membrane-spanning segment; sequence IFWVLVSQASLWFATFLSVFY. Residues 104-127 lie on the Cytoplasmic side of the membrane; that stretch reads CKKITTFDHPAYLWLKQRAYNLSL. A helical membrane pass occupies residues 128 to 148; it reads WCLLGYFIINLLLTVQIGLMF. At 149 to 175 the chain is on the extracellular side; the sequence is YHPPQGNSSIRYPFESWQYLYAFRLNS. An N-linked (GlcNAc...) asparagine glycan is attached at asparagine 155. The chain crosses the membrane as a helical span at residues 176–196; sequence GSYLPLMVFLVSSGMLIVSLY. Topologically, residues 197-223 are cytoplasmic; sequence THHKKMKVHSAGRRDVRAKAHITALKS. Residues 224–244 traverse the membrane as a helical segment; the sequence is LGCFLLLHLVYIMASPFSIAS. Topologically, residues 245 to 253 are extracellular; the sequence is KTYPPDLTS. Residues 254–274 form a helical membrane-spanning segment; it reads VFIWETLMAAYPSLHSLILIM. The Cytoplasmic segment spans residues 275 to 299; the sequence is GIPRVKQTCQKIXWKTVCARRCWGP.

Belongs to the G-protein coupled receptor T2R family.

It localises to the membrane. Its function is as follows. Receptor that may play a role in the perception of bitterness and is gustducin-linked. May play a role in sensing the chemical composition of the gastrointestinal content. The activity of this receptor may stimulate alpha gustducin, mediate PLC-beta-2 activation and lead to the gating of TRPM5. The polypeptide is Taste receptor type 2 member 5 (TAS2R5) (Pan troglodytes (Chimpanzee)).